The sequence spans 226 residues: Enolase-phosphatase E1 (226 aa).

Belongs to the HAD-like hydrolase superfamily. MasA/MtnC family. As to quaternary structure, monomer. The cofactor is Mg(2+).

The enzyme catalyses 5-methylsulfanyl-2,3-dioxopentyl phosphate + H2O = 1,2-dihydroxy-5-(methylsulfanyl)pent-1-en-3-one + phosphate. It participates in amino-acid biosynthesis; L-methionine biosynthesis via salvage pathway; L-methionine from S-methyl-5-thio-alpha-D-ribose 1-phosphate: step 3/6. The protein operates within amino-acid biosynthesis; L-methionine biosynthesis via salvage pathway; L-methionine from S-methyl-5-thio-alpha-D-ribose 1-phosphate: step 4/6. Its function is as follows. Bifunctional enzyme that catalyzes the enolization of 2,3-diketo-5-methylthiopentyl-1-phosphate (DK-MTP-1-P) into the intermediate 2-hydroxy-3-keto-5-methylthiopentenyl-1-phosphate (HK-MTPenyl-1-P), which is then dephosphorylated to form the acireductone 1,2-dihydroxy-3-keto-5-methylthiopentene (DHK-MTPene). This is Enolase-phosphatase E1 from Shewanella oneidensis (strain ATCC 700550 / JCM 31522 / CIP 106686 / LMG 19005 / NCIMB 14063 / MR-1).